The following is a 20-amino-acid chain: Protease inhibitor (20 aa).

As to quaternary structure, monomer. Glycosylated. Stored in epidermis and secreted into the hemolymph and cuticle. Not detected in the interior of the epidermis, fat body cells or columnar or goblet cells of the midgut epithelium (at protein level).

Functionally, inhibits trypsin and chymotrypsin. This chain is Protease inhibitor, found in Antheraea mylitta (Tasar silkworm).